The primary structure comprises 456 residues: Putative E3 ubiquitin-protein ligase XBAT31 (456 aa).

ANK repeat units follow at residues 45–74, 78–107, 112–141, 157–186, and 194–224; these read DRHSVLHVAAANGQIEILSLLLERFTNPDL, HKQTPLMLAAMYGRISCVKKLAEVGANILM, NRRTCLHYAAYYGHANCVQAILSAAQSSPV, KGATPLHLAARQRRPECVNVLLDSGSLVCA, and PGSTPLHLAARSGSIDCVRKLLAWGADRLQR. Residues 319–368 form an RING-type zinc finger; that stretch reads CCICFEQVCTIEVKDCGHQMCAQCTLALCCHNKPNPTTSTVTPPVCPFCR.

It catalyses the reaction S-ubiquitinyl-[E2 ubiquitin-conjugating enzyme]-L-cysteine + [acceptor protein]-L-lysine = [E2 ubiquitin-conjugating enzyme]-L-cysteine + N(6)-ubiquitinyl-[acceptor protein]-L-lysine.. It participates in protein modification; protein ubiquitination. No E3 ubiquitin-protein ligase activity observed when associated with the E2 enzyme UBC8 in vitro. This chain is Putative E3 ubiquitin-protein ligase XBAT31 (XBAT31), found in Arabidopsis thaliana (Mouse-ear cress).